A 275-amino-acid chain; its full sequence is Glucosamine-6-phosphate deaminase 2 (275 aa).

Catalysis depends on aspartate 72, which acts as the Proton acceptor; for enolization step. Positions asparagine 102 to isoleucine 131 form a coiled coil. Aspartate 141 (for ring-opening step) is an active-site residue. Histidine 143 (proton acceptor; for ring-opening step) is an active-site residue. Glutamate 148 serves as the catalytic For ring-opening step.

Belongs to the glucosamine/galactosamine-6-phosphate isomerase family. In terms of assembly, homohexamer.

It localises to the cytoplasm. The enzyme catalyses alpha-D-glucosamine 6-phosphate + H2O = beta-D-fructose 6-phosphate + NH4(+). Catalyzes the reversible conversion of alpha-D-glucosamine 6-phosphate (GlcN-6P) into beta-D-fructose 6-phosphate (Fru-6P) and ammonium ion, a regulatory reaction step in de novo uridine diphosphate-N-acetyl-alpha-D-glucosamine (UDP-GlcNAc) biosynthesis via hexosamine pathway. In Xenopus laevis (African clawed frog), this protein is Glucosamine-6-phosphate deaminase 2.